We begin with the raw amino-acid sequence, 423 residues long: Nucleoporin NUP42 (423 aa).

A C3H1-type zinc finger spans residues 1–25; that stretch reads MAICQFFLQGRCRFGDRCWNEHPGA. One copy of the FG 1 repeat lies at 14-15; that stretch reads FG. The interval 24–85 is disordered; it reads GARGAGGGRQ…EKPYFSSFDS (62 aa). The span at 40-69 shows a compositional bias: polar residues; that stretch reads SGNNRRGWNTTSQRYSNVIQPSSFSKSTPW. The tract at residues 94 to 170 is interaction with HIV-1 Vpr; that stretch reads GFGLSENPFA…EYHNFLTSNN (77 aa). The FG 2 repeat unit spans residues 95-96; sequence FG. Residue serine 106 is modified to Phosphoserine. 10 FG repeats span residues 218-219, 220-221, 265-266, 271-272, 288-289, 290-291, 311-312, 336-337, 345-346, and 364-365; these read FG. The interaction with GLE1 stretch occupies residues 365–423; it reads GNSSISTSLSASSSIIATDNVLFTPRDKLTVEELEQFQSKKFTLGKIPLKPPPLELLNV.

In terms of assembly, probable component of the nuclear pore complex (NPC). Interacts with nuclear export protein NXF1. Interacts with GLE1. Able to form a heterotrimer with NUP155 and GLE1 in vitro. Interacts with XPO1. As to quaternary structure, (Microbial infection) Interacts with the HIV-1 virus proteins Rev and Vpr. The interaction with HIV-1 Rev, a protein that mediates nuclear export of unspliced viral RNAs, suggests that its function may be bypassed by the HIV-1 virus. O-glycosylated. As to expression, ubiquitously expressed.

It is found in the nucleus. The protein resides in the nuclear pore complex. The protein localises to the nucleus membrane. Functionally, required for the export of mRNAs containing poly(A) tails from the nucleus into the cytoplasm. (Microbial infection) In case of infection by HIV-1, it may participate in the docking of viral Vpr at the nuclear envelope. The sequence is that of Nucleoporin NUP42 from Homo sapiens (Human).